Here is a 162-residue protein sequence, read N- to C-terminus: Putative colanic acid biosynthesis acetyltransferase WcaB (162 aa).

The protein belongs to the transferase hexapeptide repeat family.

The protein operates within slime biogenesis; slime polysaccharide biosynthesis. The polypeptide is Putative colanic acid biosynthesis acetyltransferase WcaB (wcaB) (Escherichia coli O157:H7).